We begin with the raw amino-acid sequence, 360 residues long: Venom serine protease Bi-VSP (360 aa).

Positions 1 to 26 (MTGSKMLFACLALIAFLHPLVHVASA) are cleaved as a signal peptide. Residues 27-113 (QECTTPNNKA…CGFSNVSHTR (87 aa)) constitute a propeptide that is removed on maturation. In terms of domain architecture, Clip spans 28–79 (ECTTPNNKAGKCLGIRVCKPLLEMLQTQGHAAADFLRQSVCKYENNNPIVCC). 7 cysteine pairs are disulfide-bonded: Cys29-Cys78, Cys39-Cys68, Cys45-Cys79, Cys104-Cys230, Cys147-Cys163, Cys278-Cys296, and Cys307-Cys335. Asn108 carries N-linked (GlcNAc...) asparagine glycosylation. The Peptidase S1 domain maps to 114–360 (VVGGKPAVLG…LDDFILPAMQ (247 aa)). His162 functions as the Charge relay system in the catalytic mechanism. 4 residues coordinate Ca(2+): Asp176, Asn178, Arg181, and Asp184. The Charge relay system role is filled by Asp210. The active-site Charge relay system is Ser311.

This sequence belongs to the peptidase S1 family. CLIP subfamily. Expressed by the venom gland.

The protein localises to the secreted. Its function is as follows. Multifunctional venom serine protease. In insects, it acts as an arthropod prophenoloxidase-activating factor, thereby triggering the phenoloxidase cascade. When injected into larvae, it induces a lethal melanization response in target insects by modulating the innate immune response. In mammals, it converts fibrinogen into fibrin, activates prothrombin, and also degrades fibrin. In mammal, it may act in a cooperative manner with the serine protease inhibitor Bi-KTI (AC G3LH89) to promote the spread of bee venom under anti-bleeding conditions. The sequence is that of Venom serine protease Bi-VSP from Bombus ignitus (Bumblebee).